A 447-amino-acid polypeptide reads, in one-letter code: Ribulose bisphosphate carboxylase large chain (447 aa).

Asparagine 89 and threonine 139 together coordinate substrate. Residue lysine 141 is the Proton acceptor of the active site. Lysine 143 contacts substrate. Residues lysine 167, aspartate 169, and glutamate 170 each contribute to the Mg(2+) site. At lysine 167 the chain carries N6-carboxylysine. The active-site Proton acceptor is the histidine 260. 3 residues coordinate substrate: arginine 261, histidine 293, and serine 345.

It belongs to the RuBisCO large chain family. Type I subfamily. As to quaternary structure, heterohexadecamer of 8 large chains and 8 small chains; disulfide-linked. The disulfide link is formed within the large subunit homodimers. It depends on Mg(2+) as a cofactor. In terms of processing, the disulfide bond which can form in the large chain dimeric partners within the hexadecamer appears to be associated with oxidative stress and protein turnover.

The protein localises to the plastid. It is found in the chloroplast. It catalyses the reaction 2 (2R)-3-phosphoglycerate + 2 H(+) = D-ribulose 1,5-bisphosphate + CO2 + H2O. The catalysed reaction is D-ribulose 1,5-bisphosphate + O2 = 2-phosphoglycolate + (2R)-3-phosphoglycerate + 2 H(+). Functionally, ruBisCO catalyzes two reactions: the carboxylation of D-ribulose 1,5-bisphosphate, the primary event in carbon dioxide fixation, as well as the oxidative fragmentation of the pentose substrate in the photorespiration process. Both reactions occur simultaneously and in competition at the same active site. The protein is Ribulose bisphosphate carboxylase large chain of Convolvulus tricolor (Dwarf morning glory).